Reading from the N-terminus, the 255-residue chain is Small ribosomal subunit protein eS1A (255 aa).

Basic residues predominate over residues 1–18; that stretch reads MAVGKNKRLSKGKKGQKK. Residues 1 to 20 are disordered; the sequence is MAVGKNKRLSKGKKGQKKRV. Residue Ala-2 is modified to N-acetylalanine; partial. At Thr-245 the chain carries Phosphothreonine. Lys-248 is covalently cross-linked (Glycyl lysine isopeptide (Lys-Gly) (interchain with G-Cter in ubiquitin)). Thr-254 carries the phosphothreonine modification.

The protein belongs to the eukaryotic ribosomal protein eS1 family. Component of the small ribosomal subunit. Mature ribosomes consist of a small (40S) and a large (60S) subunit. The 40S subunit contains about 33 different proteins and 1 molecule of RNA (18S). The 60S subunit contains about 49 different proteins and 3 molecules of RNA (25S, 5.8S and 5S).

It localises to the cytoplasm. The sequence is that of Small ribosomal subunit protein eS1A from Saccharomyces cerevisiae (strain RM11-1a) (Baker's yeast).